An 84-amino-acid polypeptide reads, in one-letter code: Large ribosomal subunit protein bL31B (84 aa).

This sequence belongs to the bacterial ribosomal protein bL31 family. Type B subfamily. Part of the 50S ribosomal subunit.

This is Large ribosomal subunit protein bL31B from Streptomyces griseus subsp. griseus (strain JCM 4626 / CBS 651.72 / NBRC 13350 / KCC S-0626 / ISP 5235).